A 440-amino-acid chain; its full sequence is uncharacterized protein (440 aa).

The next 12 membrane-spanning stretches (helical) occupy residues 24–44, 47–67, 93–113, 117–137, 155–175, 183–203, 229–249, 276–296, 323–343, 346–366, 379–399, and 400–420; these read VVIGLGSMIGAGIFAALAPAA, AGSGLLLGLAVAAVVAYCNAI, FWGYLAGWGFVVGKTASCAAM, VGFYVWPAQAHAVAVAVVVAL, IVAVVLVVLTAVVVAAYGSGA, IGVDAHVWGMLQAAGLLFFAF, LALGITLAVYALVAVAVIAVL, VVQIGAAVAALGSLLALILGV, PFRAELVVGAVVAALAATADI, AIGFSSFGVLVYYAIANASAL, IPLVGLIGCVVLAFALPLSSV, and AAGAAVLGVGVAAYGVRRIIT.

This sequence belongs to the amino acid-polyamine-organocation (APC) superfamily.

It localises to the cell membrane. Functionally, probable amino-acid or metabolite transport protein. This is an uncharacterized protein from Mycobacterium bovis (strain ATCC BAA-935 / AF2122/97).